Consider the following 286-residue polypeptide: Aspartate-semialdehyde dehydrogenase (286 aa).

NADP(+) contacts are provided by residues 10–13 (RGMV), 37–38 (TS), and Q74. Residue R103 coordinates phosphate. Catalysis depends on C136, which acts as the Acyl-thioester intermediate. Q163 is a binding site for substrate. Residues 166–167 (SG) and P194 each bind NADP(+). E242 is a substrate binding site. A phosphate-binding site is contributed by K245. R269 provides a ligand contact to substrate. H276 functions as the Proton acceptor in the catalytic mechanism.

This sequence belongs to the aspartate-semialdehyde dehydrogenase family. In terms of assembly, homodimer.

It carries out the reaction L-aspartate 4-semialdehyde + phosphate + NADP(+) = 4-phospho-L-aspartate + NADPH + H(+). It functions in the pathway amino-acid biosynthesis; L-lysine biosynthesis via DAP pathway; (S)-tetrahydrodipicolinate from L-aspartate: step 2/4. The protein operates within amino-acid biosynthesis; L-methionine biosynthesis via de novo pathway; L-homoserine from L-aspartate: step 2/3. Its pathway is amino-acid biosynthesis; L-threonine biosynthesis; L-threonine from L-aspartate: step 2/5. Functionally, catalyzes the NADPH-dependent formation of L-aspartate-semialdehyde (L-ASA) by the reductive dephosphorylation of L-aspartyl-4-phosphate. The chain is Aspartate-semialdehyde dehydrogenase (asd) from Actinobacillus pleuropneumoniae (Haemophilus pleuropneumoniae).